Reading from the N-terminus, the 291-residue chain is tRNA dimethylallyltransferase (291 aa).

11-18 (GPTASGKS) is an ATP binding site. 13–18 (TASGKS) is a substrate binding site. The interval 42–45 (DSMQ) is interaction with substrate tRNA.

This sequence belongs to the IPP transferase family. As to quaternary structure, monomer. Mg(2+) is required as a cofactor.

It catalyses the reaction adenosine(37) in tRNA + dimethylallyl diphosphate = N(6)-dimethylallyladenosine(37) in tRNA + diphosphate. In terms of biological role, catalyzes the transfer of a dimethylallyl group onto the adenine at position 37 in tRNAs that read codons beginning with uridine, leading to the formation of N6-(dimethylallyl)adenosine (i(6)A). This chain is tRNA dimethylallyltransferase, found in Rubrobacter xylanophilus (strain DSM 9941 / JCM 11954 / NBRC 16129 / PRD-1).